The sequence spans 447 residues: Probable 3-deoxy-D-manno-octulosonic acid transferase, mitochondrial (447 aa).

The N-terminal 32 residues, 1-32, are a transit peptide targeting the mitochondrion; it reads MKLGVFVYRLYRALTYGVSPLIHLHIRWRRLR. Glu-66 serves as the catalytic Proton acceptor. CMP is bound by residues 278–279, 320–322, and 347–350; these read PR, LGE, and NLSE.

Belongs to the glycosyltransferase group 1 family. Glycosyltransferase 30 subfamily. Expressed in leaves, stems and flowers.

The protein resides in the mitochondrion. The enzyme catalyses lipid IVA (E. coli) + CMP-3-deoxy-beta-D-manno-octulosonate = alpha-Kdo-(2-&gt;6)-lipid IVA (E. coli) + CMP + H(+). It carries out the reaction alpha-Kdo-(2-&gt;6)-lipid IVA (E. coli) + CMP-3-deoxy-beta-D-manno-octulosonate = alpha-Kdo-(2-&gt;4)-alpha-Kdo-(2-&gt;6)-lipid IVA (E. coli) + CMP + H(+). Its pathway is glycolipid biosynthesis; KDO(2)-lipid A biosynthesis; KDO(2)-lipid A from CMP-3-deoxy-D-manno-octulosonate and lipid IV(A): step 1/4. It functions in the pathway glycolipid biosynthesis; KDO(2)-lipid A biosynthesis; KDO(2)-lipid A from CMP-3-deoxy-D-manno-octulosonate and lipid IV(A): step 2/4. Involved in the biosynthesis of lipid A, a phosphorylated glycolipid that in bacteria anchors the lipopolysaccharide to the outer membrane of the cell. Catalyzes the transfer of two 3-deoxy-D-manno-octulosonate (Kdo) residues from CMP-Kdo to lipid IV(A), the tetraacyldisaccharide-1,4'-bisphosphate precursor of lipid A. Lipid A-like molecules in plants may serve as structural components of the outer membranes of mitochondria and/or chloroplasts, or may be involved in signal transduction or plant defense responses. The chain is Probable 3-deoxy-D-manno-octulosonic acid transferase, mitochondrial (KDTA) from Arabidopsis thaliana (Mouse-ear cress).